Consider the following 91-residue polypeptide: Cell division topological specificity factor (91 aa).

It belongs to the MinE family.

Prevents the cell division inhibition by proteins MinC and MinD at internal division sites while permitting inhibition at polar sites. This ensures cell division at the proper site by restricting the formation of a division septum at the midpoint of the long axis of the cell. The polypeptide is Cell division topological specificity factor (Thermoanaerobacter pseudethanolicus (strain ATCC 33223 / 39E) (Clostridium thermohydrosulfuricum)).